The following is a 403-amino-acid chain: Tryptophan synthase beta chain (403 aa).

Residue Lys93 is modified to N6-(pyridoxal phosphate)lysine.

Belongs to the TrpB family. As to quaternary structure, tetramer of two alpha and two beta chains. Pyridoxal 5'-phosphate is required as a cofactor.

It catalyses the reaction (1S,2R)-1-C-(indol-3-yl)glycerol 3-phosphate + L-serine = D-glyceraldehyde 3-phosphate + L-tryptophan + H2O. The protein operates within amino-acid biosynthesis; L-tryptophan biosynthesis; L-tryptophan from chorismate: step 5/5. Its function is as follows. The beta subunit is responsible for the synthesis of L-tryptophan from indole and L-serine. The protein is Tryptophan synthase beta chain of Acinetobacter baylyi (strain ATCC 33305 / BD413 / ADP1).